A 1091-amino-acid chain; its full sequence is Constitutive coactivator of PPAR-gamma-like protein 2 (1091 aa).

A compositionally biased stretch (low complexity) spans Gln35–Pro53. 4 disordered regions span residues Gln35 to Pro105, Asn503 to His575, Ser966 to Ser1010, and Val1037 to Val1077. Arg57 carries the post-translational modification Omega-N-methylarginine. The segment covering Ser82–Gly95 has biased composition (basic residues). Polar residues predominate over residues Gly532 to Pro544. The span at Ser966 to Gly976 shows a compositional bias: low complexity. Arg972 is modified (omega-N-methylarginine). Residues Ser1062–Val1077 are compositionally biased toward basic and acidic residues.

Belongs to the constitutive coactivator of PPAR-gamma family.

This is Constitutive coactivator of PPAR-gamma-like protein 2 (Fam120c) from Mus musculus (Mouse).